The following is a 124-amino-acid chain: Quinol oxidase subunit 4 (124 aa).

The next 3 membrane-spanning stretches (helical) occupy residues 16 to 36 (IVGF…AVYT), 44 to 64 (LWII…MFMH), and 78 to 98 (TLFG…IFAA).

Belongs to the cytochrome c oxidase bacterial subunit 4 family.

The protein resides in the cell membrane. It catalyses the reaction 2 a quinol + O2 = 2 a quinone + 2 H2O. Functionally, catalyzes quinol oxidation with the concomitant reduction of oxygen to water. Major component for energy conversion during vegetative growth. The sequence is that of Quinol oxidase subunit 4 (qoxD) from Bacillus spizizenii (strain ATCC 23059 / NRRL B-14472 / W23) (Bacillus subtilis subsp. spizizenii).